The chain runs to 417 residues: Serine--tRNA ligase (417 aa).

L-serine is bound at residue 232–234 (TAE). ATP contacts are provided by residues 263–265 (RRE) and Val-279. Glu-286 serves as a coordination point for L-serine. Position 350–353 (350–353 (EISS)) interacts with ATP. Ser-385 contacts L-serine.

It belongs to the class-II aminoacyl-tRNA synthetase family. Type-1 seryl-tRNA synthetase subfamily. Homodimer. The tRNA molecule binds across the dimer.

It is found in the cytoplasm. It catalyses the reaction tRNA(Ser) + L-serine + ATP = L-seryl-tRNA(Ser) + AMP + diphosphate + H(+). It carries out the reaction tRNA(Sec) + L-serine + ATP = L-seryl-tRNA(Sec) + AMP + diphosphate + H(+). Its pathway is aminoacyl-tRNA biosynthesis; selenocysteinyl-tRNA(Sec) biosynthesis; L-seryl-tRNA(Sec) from L-serine and tRNA(Sec): step 1/1. Catalyzes the attachment of serine to tRNA(Ser). Is also able to aminoacylate tRNA(Sec) with serine, to form the misacylated tRNA L-seryl-tRNA(Sec), which will be further converted into selenocysteinyl-tRNA(Sec). This is Serine--tRNA ligase from Leptospira borgpetersenii serovar Hardjo-bovis (strain JB197).